We begin with the raw amino-acid sequence, 1759 residues long: Replicase polyprotein (1759 aa).

In terms of domain architecture, DRBM spans 23 to 90 (DKISTLKMVA…ARQMLLLLSG (68 aa)). Positions 113–140 (YTRLEKAIERRDDKIKTLIKELRRQIKN) form a coiled coil. Positions 421 to 595 (AKQLYEYVSC…KEYGIETEKG (175 aa)) constitute an SF3 helicase domain. 449 to 456 (GESGVGKT) is a binding site for ATP. One can recognise a Peptidase C3 domain in the interval 950-1191 (DAAHNLMIDV…YACPLTQECL (242 aa)). Catalysis depends on for picornain 3C-like protease activity residues histidine 994, aspartate 1054, and cysteine 1152. The region spanning 1483–1622 (SHVIAGDFGN…NIDAKVVEWF (140 aa)) is the RdRp catalytic domain.

Post-translationally, protein 1A might be expressed through a ribosomal skip from one codon to the next without formation of a peptide bond.

It catalyses the reaction RNA(n) + a ribonucleoside 5'-triphosphate = RNA(n+1) + diphosphate. Protein 1A functions as a suppressor of RNA-mediated gene silencing, an antiviral defense mechanism of insect cells. Binds to long dsRNA and to a lesser extent, to siRNA. Functionally, RNA-directed RNA polymerase replicates genomic and antigenomic RNA. This chain is Replicase polyprotein, found in Drosophila C virus (strain EB) (DCV).